The sequence spans 178 residues: Large ribosomal subunit protein uL6 (178 aa).

The protein belongs to the universal ribosomal protein uL6 family. As to quaternary structure, part of the 50S ribosomal subunit. Interacts weakly with protein L13.

Functionally, this protein binds to the 23S rRNA, and is important in its secondary structure. It is located near the subunit interface in the base of the L7/L12 stalk, and near the tRNA binding site of the peptidyltransferase center. This is Large ribosomal subunit protein uL6 from Haloarcula marismortui (strain ATCC 43049 / DSM 3752 / JCM 8966 / VKM B-1809) (Halobacterium marismortui).